The chain runs to 292 residues: Ribosomal protein L11 methyltransferase (292 aa).

Residues Thr144, Gly165, Asp187, and Asn229 each contribute to the S-adenosyl-L-methionine site.

The protein belongs to the methyltransferase superfamily. PrmA family.

The protein resides in the cytoplasm. It catalyses the reaction L-lysyl-[protein] + 3 S-adenosyl-L-methionine = N(6),N(6),N(6)-trimethyl-L-lysyl-[protein] + 3 S-adenosyl-L-homocysteine + 3 H(+). Methylates ribosomal protein L11. The chain is Ribosomal protein L11 methyltransferase from Azotobacter vinelandii (strain DJ / ATCC BAA-1303).